An 85-amino-acid chain; its full sequence is MNYLVMISLALLFMTGVESKKDGYIVDDKNCTFFCGRNAYCNDECKKKGAESGYCQWASPYGNACYCYKLPDRVSTKKKGGCNGR.

Positions 1–19 (MNYLVMISLALLFMTGVES) are cleaved as a signal peptide. Residues 21-83 (KDGYIVDDKN…VSTKKKGGCN (63 aa)) enclose the LCN-type CS-alpha/beta domain. Disulfide bonds link Cys-31–Cys-82, Cys-35–Cys-55, Cys-41–Cys-65, and Cys-45–Cys-67. The residue at position 83 (Asn-83) is an Asparagine amide.

It belongs to the long (4 C-C) scorpion toxin superfamily. Sodium channel inhibitor family. Alpha subfamily. As to expression, expressed by the venom gland.

It is found in the secreted. Its function is as follows. Alpha toxins bind voltage-independently at site-3 of sodium channels (Nav) and inhibit the inactivation of the activated channels, thereby blocking neuronal transmission. This is Toxin AahP1005 from Androctonus australis (Sahara scorpion).